The following is a 121-amino-acid chain: Small ribosomal subunit protein uS13 (121 aa).

The disordered stretch occupies residues 94–121 (GLPVRGQRTRTNARTRKGKRKTVAGKKK).

It belongs to the universal ribosomal protein uS13 family. As to quaternary structure, part of the 30S ribosomal subunit. Forms a loose heterodimer with protein S19. Forms two bridges to the 50S subunit in the 70S ribosome.

Its function is as follows. Located at the top of the head of the 30S subunit, it contacts several helices of the 16S rRNA. In the 70S ribosome it contacts the 23S rRNA (bridge B1a) and protein L5 of the 50S subunit (bridge B1b), connecting the 2 subunits; these bridges are implicated in subunit movement. Contacts the tRNAs in the A and P-sites. This Treponema pallidum (strain Nichols) protein is Small ribosomal subunit protein uS13.